The following is a 245-amino-acid chain: Large ribosomal subunit protein uL2 (245 aa).

Residues Val-198–Arg-245 are disordered. Residues Ala-230 to Arg-245 show a composition bias toward basic residues.

It belongs to the universal ribosomal protein uL2 family. As to quaternary structure, part of the 50S ribosomal subunit. Forms a bridge to the 30S subunit in the 70S ribosome.

Its function is as follows. One of the primary rRNA binding proteins. Required for association of the 30S and 50S subunits to form the 70S ribosome, for tRNA binding and peptide bond formation. It has been suggested to have peptidyltransferase activity; this is somewhat controversial. Makes several contacts with the 16S rRNA in the 70S ribosome. The chain is Large ribosomal subunit protein uL2 from Korarchaeum cryptofilum (strain OPF8).